The following is a 155-amino-acid chain: Small ribosomal subunit protein uS9 (155 aa).

This sequence belongs to the universal ribosomal protein uS9 family.

The polypeptide is Small ribosomal subunit protein uS9 (Rhizobium leguminosarum bv. trifolii (strain WSM2304)).